Reading from the N-terminus, the 494-residue chain is Cytochrome P450 2C44 (494 aa).

The N-terminal stretch at 1–25 is a signal peptide; it reads MELLGLPTLALLVLVMSLSLLSVWT. Residue Ser-131 is modified to Phosphoserine. Lys-253 and Lys-379 each carry N6-acetyllysine. Position 439 (Cys-439) interacts with heme.

Belongs to the cytochrome P450 family. Heme serves as cofactor. As to expression, highly expressed in liver, particularly in hepatocytes and bile duct epithelial cells (at protein level). Expressed in nephron segments. Prominent expression is detected in proximal tubules at the corticomedullary junction (at protein level). Also expressed in renal cortical collecting duct. Lower expression levels are detected in adrenal glands.

The protein resides in the endoplasmic reticulum membrane. It localises to the microsome membrane. The enzyme catalyses (5Z,8Z,11Z,14Z)-eicosatetraenoate + reduced [NADPH--hemoprotein reductase] + O2 = (8R,9S)-epoxy-(5Z,11Z,14Z)-eicosatrienoate + oxidized [NADPH--hemoprotein reductase] + H2O + H(+). It carries out the reaction (5Z,8Z,11Z,14Z)-eicosatetraenoate + reduced [NADPH--hemoprotein reductase] + O2 = (11R,12S)-epoxy-(5Z,8Z,14Z)-eicosatrienoate + oxidized [NADPH--hemoprotein reductase] + H2O + H(+). The catalysed reaction is (5Z,8Z,11Z,14Z)-eicosatetraenoate + reduced [NADPH--hemoprotein reductase] + O2 = 14,15-epoxy-(5Z,8Z,11Z)-eicosatrienoate + oxidized [NADPH--hemoprotein reductase] + H2O + H(+). It catalyses the reaction (5Z,8Z,11Z,14Z,17Z)-eicosapentaenoate + reduced [NADPH--hemoprotein reductase] + O2 = 8,9-epoxy-(5Z,11Z,14Z,17Z)-eicosatetraenoate + oxidized [NADPH--hemoprotein reductase] + H2O + H(+). The enzyme catalyses (5Z,8Z,11Z,14Z,17Z)-eicosapentaenoate + reduced [NADPH--hemoprotein reductase] + O2 = 11,12-epoxy-(5Z,8Z,14Z,17Z)-eicosatetraenoate + oxidized [NADPH--hemoprotein reductase] + H2O + H(+). It carries out the reaction (5Z,8Z,11Z,14Z,17Z)-eicosapentaenoate + reduced [NADPH--hemoprotein reductase] + O2 = 14,15-epoxy-(5Z,8Z,11Z,17Z)-eicosatetraenoate + oxidized [NADPH--hemoprotein reductase] + H2O + H(+). The catalysed reaction is (5Z,8Z,11Z,14Z,17Z)-eicosapentaenoate + reduced [NADPH--hemoprotein reductase] + O2 = (17R,18S)-epoxy-(5Z,8Z,11Z,14Z)-eicosatetraenoate + oxidized [NADPH--hemoprotein reductase] + H2O + H(+). It catalyses the reaction (5Z,8Z,11Z,14Z,17Z)-eicosapentaenoate + reduced [NADPH--hemoprotein reductase] + O2 = (17S,18R)-epoxy-(5Z,8Z,11Z,14Z)-eicosatetraenoate + oxidized [NADPH--hemoprotein reductase] + H2O + H(+). The enzyme catalyses 20-hydroxy-(5Z,8Z,11Z,14Z)-eicosatetraenoate + reduced [NADPH--hemoprotein reductase] + O2 = 20-hydroxy-8,9-epoxy-(5Z,11Z,14Z)-eicosatrienoate + oxidized [NADPH--hemoprotein reductase] + H2O + H(+). It functions in the pathway lipid metabolism; arachidonate metabolism. A cytochrome P450 monooxygenase involved in polyunsaturated fatty acids (PUFAs) metabolism and signaling. Catalyzes preferentially the epoxidation of double bonds of PUFAs. Converts arachidonic acid (ARA, C20:4(n-6)) primarily to stereospecific products 8R,9S-epoxyeicosatrienoate (EET) and 11R,12S-EET. Plays a major role in the formation of EETs and hydroxy-EETs (HEETs) in kidney. Via EETs may inhibit the epithelial sodium channels (ENaCs) in nephron segments, preventing excessive sodium absorption during high dietary salt intake. Participates in the formation of anti-inflammatory hydroxyepoxyeicosatrienoic acids (HEETs) by converting 20-hydroxyeicosatetraenoic acid (20-HETE) to 20,8,9-HEET, an activator of PPARA. Metabolizes eicosapentaenoic acid (EPA, C20:5(n-3)) to epoxyeicosatetraenoic acid (EETeTr) regioisomers, 8,9-, 11,12-, 14,15-, and 17,18- EETeTr, preferentially producing 17R,18S enantiomer. Mechanistically, uses molecular oxygen inserting one oxygen atom into a substrate, and reducing the second into a water molecule, with two electrons provided by NADPH via cytochrome P450 reductase (CPR; NADPH-ferrihemoprotein reductase). This chain is Cytochrome P450 2C44, found in Mus musculus (Mouse).